Consider the following 330-residue polypeptide: Uroporphyrinogen decarboxylase (330 aa).

Substrate is bound by residues 10–14 (RQAGR), Phe29, Ser59, Asp60, Tyr137, Ser192, and His307.

The protein belongs to the uroporphyrinogen decarboxylase family. Homodimer.

Its subcellular location is the plastid. The protein localises to the chloroplast. The catalysed reaction is uroporphyrinogen III + 4 H(+) = coproporphyrinogen III + 4 CO2. The protein operates within porphyrin-containing compound metabolism; protoporphyrin-IX biosynthesis; coproporphyrinogen-III from 5-aminolevulinate: step 4/4. Catalyzes the decarboxylation of four acetate groups of uroporphyrinogen-III to yield coproporphyrinogen-III. The polypeptide is Uroporphyrinogen decarboxylase (DCUP) (Hordeum vulgare (Barley)).